The primary structure comprises 60 residues: Chromatin protein Cren7 (60 aa).

It belongs to the Cren7 family. In terms of assembly, monomer. Post-translationally, methylated at multiple sites, to varying extents.

It localises to the chromosome. It is found in the cytoplasm. Its function is as follows. A chromatin protein, binds double-stranded DNA without sequence specificity. Constrains negative DNA supercoils. In Saccharolobus islandicus (strain M.16.4 / Kamchatka #3) (Sulfolobus islandicus), this protein is Chromatin protein Cren7.